The following is a 446-amino-acid chain: Trigger factor (446 aa).

One can recognise a PPIase FKBP-type domain in the interval 163–248 (GDRLVIDFEG…VKEIKKKNLL (86 aa)).

This sequence belongs to the FKBP-type PPIase family. Tig subfamily.

Its subcellular location is the cytoplasm. It carries out the reaction [protein]-peptidylproline (omega=180) = [protein]-peptidylproline (omega=0). Functionally, involved in protein export. Acts as a chaperone by maintaining the newly synthesized protein in an open conformation. Functions as a peptidyl-prolyl cis-trans isomerase. The chain is Trigger factor from Natranaerobius thermophilus (strain ATCC BAA-1301 / DSM 18059 / JW/NM-WN-LF).